The following is a 445-amino-acid chain: Rab GDP dissociation inhibitor beta (445 aa).

Methionine 1 is modified (N-acetylmethionine). An N6-succinyllysine modification is found at lysine 57. N6-acetyllysine is present on lysine 112. At serine 130 the chain carries Phosphoserine. N6-acetyllysine is present on lysine 269. A Phosphoserine modification is found at serine 382.

Belongs to the Rab GDI family. Interacts with RHOH. Interacts with the GDP-bound inactive forms of RAB3A, RAB3B, RAB3C, RAB5A, RAB5B, RAB5C, RAB8A, RAB8B, RAB10, RAB12, RAB35, and RAB43; binds RAB3D to a lesser extent. Interacts with DZIP1; this interaction negatively regulates the interaction of GDI2 with GDP-bound RAB8A.

The protein localises to the cytoplasm. The protein resides in the membrane. It localises to the golgi apparatus. It is found in the trans-Golgi network. In terms of biological role, GDP-dissociation inhibitor preventing the GDP to GTP exchange of most Rab proteins. By keeping these small GTPases in their inactive GDP-bound form regulates intracellular membrane trafficking. Negatively regulates protein transport to the cilium and ciliogenesis through the inhibition of RAB8A. The sequence is that of Rab GDP dissociation inhibitor beta (GDI2) from Pongo abelii (Sumatran orangutan).